The primary structure comprises 72 residues: DNA-directed RNA polymerase subunit Rpo10 (72 aa).

Zn(2+)-binding residues include Cys7, Cys10, Cys54, and Cys55.

This sequence belongs to the archaeal Rpo10/eukaryotic RPB10 RNA polymerase subunit family. As to quaternary structure, part of the RNA polymerase complex. Requires Zn(2+) as cofactor.

It localises to the cytoplasm. The enzyme catalyses RNA(n) + a ribonucleoside 5'-triphosphate = RNA(n+1) + diphosphate. Functionally, DNA-dependent RNA polymerase (RNAP) catalyzes the transcription of DNA into RNA using the four ribonucleoside triphosphates as substrates. The polypeptide is DNA-directed RNA polymerase subunit Rpo10 (Picrophilus torridus (strain ATCC 700027 / DSM 9790 / JCM 10055 / NBRC 100828 / KAW 2/3)).